The following is a 531-amino-acid chain: Peptide chain release factor 3 (531 aa).

The region spanning 10 to 278 (RRRRTFAIIS…SLIEWAPAPK (269 aa)) is the tr-type G domain. GTP contacts are provided by residues 19–26 (SHPDAGKT), 87–91 (DTPGH), and 141–144 (NKYD).

It belongs to the TRAFAC class translation factor GTPase superfamily. Classic translation factor GTPase family. PrfC subfamily.

It localises to the cytoplasm. In terms of biological role, increases the formation of ribosomal termination complexes and stimulates activities of RF-1 and RF-2. It binds guanine nucleotides and has strong preference for UGA stop codons. It may interact directly with the ribosome. The stimulation of RF-1 and RF-2 is significantly reduced by GTP and GDP, but not by GMP. This Neisseria meningitidis serogroup A / serotype 4A (strain DSM 15465 / Z2491) protein is Peptide chain release factor 3.